The following is a 135-amino-acid chain: Large ribosomal subunit protein mL41 (135 aa).

Residues 1 to 13 (MGFLTAVTQGLVR) constitute a mitochondrion transit peptide.

This sequence belongs to the mitochondrion-specific ribosomal protein mL41 family. Component of the mitochondrial ribosome large subunit (39S) which comprises a 16S rRNA and about 50 distinct proteins. Interacts with BCL2.

The protein localises to the mitochondrion. In terms of biological role, component of the mitochondrial ribosome large subunit. Also involved in apoptosis and cell cycle. Enhances p53/TP53 stability, thereby contributing to p53/TP53-induced apoptosis in response to growth-inhibitory condition. Enhances p53/TP53 translocation to the mitochondria. Has the ability to arrest the cell cycle at the G1 phase, possibly by stabilizing the CDKN1A and CDKN1B (p27Kip1) proteins. The sequence is that of Large ribosomal subunit protein mL41 (Mrpl41) from Mus musculus (Mouse).